Reading from the N-terminus, the 929-residue chain is ATP-dependent RNA helicase DDX42 (929 aa).

Lys-5 bears the N6-acetyllysine mark. Residue Arg-12 is modified to Omega-N-methylarginine. Disordered regions lie at residues Lys-25–Phe-119 and Glu-182–Ile-203. The span at Ser-35–Ala-52 shows a compositional bias: low complexity. Ser-58 is modified (phosphoserine). Residues Asp-70 to Ser-84 show a composition bias toward acidic residues. Phosphoserine is present on residues Ser-96, Ser-104, Ser-109, and Ser-111. The stretch at Leu-116–Gln-157 forms a coiled coil. At Ser-185 the chain carries Phosphoserine. A Q motif motif is present at residues Ser-253 to Cys-281. Positions Val-284–Val-459 constitute a Helicase ATP-binding domain. Ala-297–Thr-304 serves as a coordination point for ATP. The DEAD box motif lies at Asp-407 to Asp-410. One can recognise a Helicase C-terminal domain in the interval Trp-487–Ala-632. Disordered regions lie at residues Glu-662–Asn-682 and Gly-723–Ser-929. The segment covering Gly-723–Ser-737 has biased composition (low complexity). Polar residues-rich tracts occupy residues Leu-738 to Pro-777 and Gly-787 to Arg-798. The interval Asn-739–Arg-828 is necessary for interaction with TP53BP2. Residues Ser-821 to Pro-911 are compositionally biased toward basic and acidic residues. A Glycyl lysine isopeptide (Lys-Gly) (interchain with G-Cter in SUMO2) cross-link involves residue Lys-894.

Belongs to the DEAD box helicase family. DDX42 subfamily. In terms of assembly, transient component of the SF3B subcomplex of the 17S U2 SnRNP complex. Interacts (via the C-terminus) with TP53BP2; the interaction is not inhibitied by TP53BP2 ubiquitination and is independent of p53/TP53.

It is found in the cytoplasm. It localises to the nucleus. It carries out the reaction ATP + H2O = ADP + phosphate + H(+). Its function is as follows. ATP-dependent RNA helicase that binds to partially double-stranded RNAs (dsRNAs) in order to unwind RNA secondary structures. Unwinding is promoted in the presence of single-strand binding proteins. Also mediates RNA duplex formation thereby displacing the single-strand RNA binding protein. ATP and ADP modulate its activity: ATP binding and hydrolysis by DDX42 triggers RNA strand separation, whereas the ADP-bound form of the protein triggers annealing of complementary RNA strands. Required for assembly of the 17S U2 SnRNP complex of the spliceosome, a large ribonucleoprotein complex that removes introns from transcribed pre-mRNAs: DDX42 associates transiently with the SF3B subcomplex of the 17S U2 SnRNP complex and is released after fulfilling its role in the assembly of 17S U2 SnRNP. Involved in the survival of cells by interacting with TP53BP2 and thereby counteracting the apoptosis-stimulating activity of TP53BP2. Relocalizes TP53BP2 to the cytoplasm. This is ATP-dependent RNA helicase DDX42 (Ddx42) from Mus musculus (Mouse).